The primary structure comprises 811 residues: Probable glutamine--tRNA ligase (811 aa).

Positions 190–217 are disordered; the sequence is DAAAGKKKGAKAKNSKQKTVDSGKAKEQ. Positions 194-205 are enriched in basic residues; it reads GKKKGAKAKNSK. Residues 207-217 are compositionally biased toward basic and acidic residues; sequence KTVDSGKAKEQ. The 'HIGH' region signature appears at 269 to 279; the sequence is PEPNGYLHIGH. ATP-binding positions include 270 to 272 and 276 to 282; these read EPN and HIGHSKA. 2 residues coordinate L-glutamine: aspartate 302 and tyrosine 447. Residues threonine 466, 495-496, and 503-505 each bind ATP; these read RL and MSK. The short motif at 502-506 is the 'KMSKS' region element; it reads LMSKR.

Belongs to the class-I aminoacyl-tRNA synthetase family.

It localises to the cytoplasm. The catalysed reaction is tRNA(Gln) + L-glutamine + ATP = L-glutaminyl-tRNA(Gln) + AMP + diphosphate. The protein is Probable glutamine--tRNA ligase (qrs1) of Schizosaccharomyces pombe (strain 972 / ATCC 24843) (Fission yeast).